A 1714-amino-acid polypeptide reads, in one-letter code: uncharacterized protein (1714 aa).

Disordered stretches follow at residues 47-70 (SVAGSEKNASDDDSDASSVMSDDL) and 584-616 (KKTGKGGWSGQKQQKPGAGGKKGATKESGKSKK). ATP-binding positions include 607–614 (ATKESGKS) and 806–813 (APTSAGKT). Basic and acidic residues predominate over residues 607–616 (ATKESGKSKK). Residues 793-963 (LDSVDRGNSA…WLNSSEQAKS (171 aa)) enclose the Helicase ATP-binding domain. A DEVH box motif is present at residues 913–916 (DEVH). The segment at 1197–1223 (KRKRDDAEKKKKGDKDEDAGPEKDDDE) is disordered. The span at 1199-1218 (KRDDAEKKKKGDKDEDAGPE) shows a compositional bias: basic and acidic residues. The Helicase C-terminal domain maps to 1237–1391 (ALERFKLRGR…NPPFTVLFLL (155 aa)).

It belongs to the helicase family. SKI2 subfamily.

It localises to the nucleus. This is an uncharacterized protein from Caenorhabditis elegans.